A 222-amino-acid polypeptide reads, in one-letter code: RNA chaperone ProQ (222 aa).

The span at 94–113 shows a compositional bias: basic and acidic residues; that stretch reads EHADHAKQQLDESKAKAAEK. Residues 94 to 171 form a disordered region; sequence EHADHAKQQL…PAKLTDSDLQ (78 aa). Residues 114 to 131 show a composition bias toward basic residues; it reads RKAKLAQQPKRKDKRQFN. A compositionally biased stretch (basic and acidic residues) spans 133–148; that stretch reads PKGEKSANSDHADTKR. Over residues 155–164 the composition is skewed to low complexity; it reads NRPNTTPPAK.

The protein belongs to the ProQ family.

The protein localises to the cytoplasm. RNA chaperone with significant RNA binding, RNA strand exchange and RNA duplexing activities. The protein is RNA chaperone ProQ of Alteromonas mediterranea (strain DSM 17117 / CIP 110805 / LMG 28347 / Deep ecotype).